The primary structure comprises 71 residues: Protein SlyX homolog (71 aa).

This sequence belongs to the SlyX family.

The sequence is that of Protein SlyX homolog from Thioalkalivibrio sulfidiphilus (strain HL-EbGR7).